Here is a 108-residue protein sequence, read N- to C-terminus: MGVTVKQLQPGDGKTYPKKGDAVTIHYVGTLENGQKFDSSRDRGEPFKTTIGVGDVIRGWDEGVPKLSLGERSVLTISGDYGYGERGFPGLIPPNATLVFDVELLGIN.

The PPIase FKBP-type domain maps to 20-108 (GDAVTIHYVG…VFDVELLGIN (89 aa)).

The protein belongs to the FKBP-type PPIase family. FKBP1 subfamily.

Its subcellular location is the cytoplasm. It catalyses the reaction [protein]-peptidylproline (omega=180) = [protein]-peptidylproline (omega=0). With respect to regulation, inhibited by both FK506 and rapamycin. Its function is as follows. PPIases accelerate the folding of proteins. It catalyzes the cis-trans isomerization of proline imidic peptide bonds in oligopeptides. In Yarrowia lipolytica (strain CLIB 122 / E 150) (Yeast), this protein is FK506-binding protein 1 (FPR1).